Reading from the N-terminus, the 142-residue chain is Large ribosomal subunit protein uL13 (142 aa).

This sequence belongs to the universal ribosomal protein uL13 family. In terms of assembly, part of the 50S ribosomal subunit.

Its function is as follows. This protein is one of the early assembly proteins of the 50S ribosomal subunit, although it is not seen to bind rRNA by itself. It is important during the early stages of 50S assembly. This Citrobacter koseri (strain ATCC BAA-895 / CDC 4225-83 / SGSC4696) protein is Large ribosomal subunit protein uL13.